The sequence spans 165 residues: Protein SprT (165 aa).

A SprT-like domain is found at 10–157 (EACYRQAEDF…YCRRCKATLV (148 aa)). H69 is a binding site for Zn(2+). Residue E70 is part of the active site. Zn(2+) is bound at residue H73.

It belongs to the SprT family. Zn(2+) serves as cofactor.

The protein localises to the cytoplasm. This is Protein SprT from Pseudomonas paraeruginosa (strain DSM 24068 / PA7) (Pseudomonas aeruginosa (strain PA7)).